Reading from the N-terminus, the 397-residue chain is Glia-derived nexin (397 aa).

The signal sequence occupies residues 1–19 (MNWHFPFFILTTVTLSSVY). N-linked (GlcNAc...) asparagine glycosylation occurs at Asn159.

This sequence belongs to the serpin family.

Its subcellular location is the secreted. It localises to the extracellular space. Serine protease inhibitor with activity toward thrombin, trypsin, and urokinase. Promotes neurite extension by inhibiting thrombin. Binds heparin. This is Glia-derived nexin (Serpine2) from Rattus norvegicus (Rat).